A 354-amino-acid polypeptide reads, in one-letter code: Protein ECM8 (354 aa).

May be involved in cell wall organization and biogenesis. The chain is Protein ECM8 (ECM8) from Saccharomyces cerevisiae (strain ATCC 204508 / S288c) (Baker's yeast).